The primary structure comprises 228 residues: Urease accessory protein UreF 1 (228 aa).

It belongs to the UreF family. As to quaternary structure, ureD, UreF and UreG form a complex that acts as a GTP-hydrolysis-dependent molecular chaperone, activating the urease apoprotein by helping to assemble the nickel containing metallocenter of UreC. The UreE protein probably delivers the nickel.

It localises to the cytoplasm. Required for maturation of urease via the functional incorporation of the urease nickel metallocenter. The polypeptide is Urease accessory protein UreF 1 (Brucella canis (strain ATCC 23365 / NCTC 10854 / RM-666)).